Consider the following 309-residue polypeptide: 4-hydroxy-3-methylbut-2-enyl diphosphate reductase (309 aa).

Residue C13 participates in [4Fe-4S] cluster binding. (2E)-4-hydroxy-3-methylbut-2-enyl diphosphate is bound by residues H42 and H75. Dimethylallyl diphosphate-binding residues include H42 and H75. Positions 42 and 75 each coordinate isopentenyl diphosphate. C97 lines the [4Fe-4S] cluster pocket. Residue H125 participates in (2E)-4-hydroxy-3-methylbut-2-enyl diphosphate binding. Residue H125 coordinates dimethylallyl diphosphate. H125 lines the isopentenyl diphosphate pocket. The active-site Proton donor is E127. T165 provides a ligand contact to (2E)-4-hydroxy-3-methylbut-2-enyl diphosphate. [4Fe-4S] cluster is bound at residue C195. (2E)-4-hydroxy-3-methylbut-2-enyl diphosphate-binding residues include S223, S224, N225, and S267. Dimethylallyl diphosphate-binding residues include S223, S224, N225, and S267. 4 residues coordinate isopentenyl diphosphate: S223, S224, N225, and S267.

It belongs to the IspH family. Requires [4Fe-4S] cluster as cofactor.

The catalysed reaction is isopentenyl diphosphate + 2 oxidized [2Fe-2S]-[ferredoxin] + H2O = (2E)-4-hydroxy-3-methylbut-2-enyl diphosphate + 2 reduced [2Fe-2S]-[ferredoxin] + 2 H(+). It catalyses the reaction dimethylallyl diphosphate + 2 oxidized [2Fe-2S]-[ferredoxin] + H2O = (2E)-4-hydroxy-3-methylbut-2-enyl diphosphate + 2 reduced [2Fe-2S]-[ferredoxin] + 2 H(+). Its pathway is isoprenoid biosynthesis; dimethylallyl diphosphate biosynthesis; dimethylallyl diphosphate from (2E)-4-hydroxy-3-methylbutenyl diphosphate: step 1/1. It participates in isoprenoid biosynthesis; isopentenyl diphosphate biosynthesis via DXP pathway; isopentenyl diphosphate from 1-deoxy-D-xylulose 5-phosphate: step 6/6. Functionally, catalyzes the conversion of 1-hydroxy-2-methyl-2-(E)-butenyl 4-diphosphate (HMBPP) into a mixture of isopentenyl diphosphate (IPP) and dimethylallyl diphosphate (DMAPP). Acts in the terminal step of the DOXP/MEP pathway for isoprenoid precursor biosynthesis. The polypeptide is 4-hydroxy-3-methylbut-2-enyl diphosphate reductase (Chlamydia abortus (strain DSM 27085 / S26/3) (Chlamydophila abortus)).